The sequence spans 309 residues: MKRKIIVGSRRSKLALTQSNWVINKLKEQYPEFDFEIKEIVTKGDRILDVTLSKVGGKGLFVSEVEQALSNSTIDFAVHSMKDVPSSLEEGLVIGAIPKRESPLDCFVFNQVSSLDDLPKGAIVGTSSLRRAAQLLKHRPDFNIRPIRGNIDTRLQKLHVENFDAIILAKAGLARMGWLENTTLKLEDIAPEVCLPAVGQGALAIECRESDQLIRDMLATIHHEETGICVEAERVFLKKLNGGCEIPIAGFATKIGEQIHFKGLVGNADGSKILESKEIGENPGQIGNKVAEVLLSEGAETIIEELRNK.

Cysteine 244 carries the post-translational modification S-(dipyrrolylmethanemethyl)cysteine.

Belongs to the HMBS family. As to quaternary structure, monomer. Dipyrromethane is required as a cofactor.

The catalysed reaction is 4 porphobilinogen + H2O = hydroxymethylbilane + 4 NH4(+). It functions in the pathway porphyrin-containing compound metabolism; protoporphyrin-IX biosynthesis; coproporphyrinogen-III from 5-aminolevulinate: step 2/4. Tetrapolymerization of the monopyrrole PBG into the hydroxymethylbilane pre-uroporphyrinogen in several discrete steps. This is Porphobilinogen deaminase from Listeria welshimeri serovar 6b (strain ATCC 35897 / DSM 20650 / CCUG 15529 / CIP 8149 / NCTC 11857 / SLCC 5334 / V8).